The sequence spans 392 residues: Probable tRNA pseudouridine synthase D 1 (392 aa).

Residue Asp92 is the Nucleophile of the active site. The region spanning 167 to 354 is the TRUD domain; sequence YFLNYYGVQR…FIGDRRAMIG (188 aa).

It belongs to the pseudouridine synthase TruD family.

The enzyme catalyses uridine(13) in tRNA = pseudouridine(13) in tRNA. Functionally, could be responsible for synthesis of pseudouridine from uracil-13 in transfer RNAs. The polypeptide is Probable tRNA pseudouridine synthase D 1 (Methanocaldococcus jannaschii (strain ATCC 43067 / DSM 2661 / JAL-1 / JCM 10045 / NBRC 100440) (Methanococcus jannaschii)).